Here is a 538-residue protein sequence, read N- to C-terminus: Putative cysteine ligase BshC (538 aa).

Residues 454–482 (LEKNAGFIQDQLQFLEKTVIRRIEEKENY) are a coiled coil.

This sequence belongs to the BshC family.

In terms of biological role, involved in bacillithiol (BSH) biosynthesis. May catalyze the last step of the pathway, the addition of cysteine to glucosamine malate (GlcN-Mal) to generate BSH. This chain is Putative cysteine ligase BshC, found in Bacillus licheniformis (strain ATCC 14580 / DSM 13 / JCM 2505 / CCUG 7422 / NBRC 12200 / NCIMB 9375 / NCTC 10341 / NRRL NRS-1264 / Gibson 46).